A 368-amino-acid polypeptide reads, in one-letter code: Nicotinamide/nicotinic acid mononucleotide adenylyltransferase (368 aa).

The segment covering 1–14 (MHTMNGDNFANSFP) has biased composition (polar residues). The tract at residues 1–25 (MHTMNGDNFANSFPKNPLLSRNSSS) is disordered. Position 36 is a phosphoserine (S36). The interval 47 to 78 (AKEHEERIRRPSVNRAWQKNSTSGGPSVSLEK) is disordered. Positions 61–72 (RAWQKNSTSGGP) are enriched in polar residues. Residues S75 and S85 each carry the phosphoserine modification. NAD(+) contacts are provided by S135 and F136. Position 143 (H143) interacts with ATP. Residues T215, G250, D252, W263, R282, and N313 each coordinate NAD(+). 318–321 (TKVR) contributes to the ATP binding site.

It belongs to the eukaryotic NMN adenylyltransferase family. The cofactor is a divalent metal cation.

It is found in the cytoplasm. Its subcellular location is the nucleus. It catalyses the reaction beta-nicotinamide D-ribonucleotide + ATP + H(+) = diphosphate + NAD(+). The catalysed reaction is nicotinate beta-D-ribonucleotide + ATP + H(+) = deamido-NAD(+) + diphosphate. It functions in the pathway cofactor biosynthesis; NAD(+) biosynthesis; deamido-NAD(+) from nicotinate D-ribonucleotide: step 1/1. Its pathway is cofactor biosynthesis; NAD(+) biosynthesis; NAD(+) from nicotinamide D-ribonucleotide: step 1/1. Catalyzes the formation of NAD(+) from nicotinamide mononucleotide (NMN) and ATP. Can also use the deamidated form; nicotinic acid mononucleotide (NaMN) as substrate to form deamido-NAD(+) (NaAD). Key enzyme in both de novo and salvage pathways for NAD(+) biosynthesis. The polypeptide is Nicotinamide/nicotinic acid mononucleotide adenylyltransferase (Schizosaccharomyces pombe (strain 972 / ATCC 24843) (Fission yeast)).